Consider the following 390-residue polypeptide: Probable tRNA sulfurtransferase (390 aa).

Positions 58 to 161 (EAVARRLQRV…DEGAYIYSRI (104 aa)) constitute a THUMP domain. ATP is bound by residues 179-180 (LI), 204-205 (HF), Arg-261, Gly-283, and Gln-292.

Belongs to the ThiI family.

The protein resides in the cytoplasm. The catalysed reaction is [ThiI sulfur-carrier protein]-S-sulfanyl-L-cysteine + a uridine in tRNA + 2 reduced [2Fe-2S]-[ferredoxin] + ATP + H(+) = [ThiI sulfur-carrier protein]-L-cysteine + a 4-thiouridine in tRNA + 2 oxidized [2Fe-2S]-[ferredoxin] + AMP + diphosphate. It carries out the reaction [ThiS sulfur-carrier protein]-C-terminal Gly-Gly-AMP + S-sulfanyl-L-cysteinyl-[cysteine desulfurase] + AH2 = [ThiS sulfur-carrier protein]-C-terminal-Gly-aminoethanethioate + L-cysteinyl-[cysteine desulfurase] + A + AMP + 2 H(+). It functions in the pathway cofactor biosynthesis; thiamine diphosphate biosynthesis. Its function is as follows. Catalyzes the ATP-dependent transfer of a sulfur to tRNA to produce 4-thiouridine in position 8 of tRNAs, which functions as a near-UV photosensor. Also catalyzes the transfer of sulfur to the sulfur carrier protein ThiS, forming ThiS-thiocarboxylate. This is a step in the synthesis of thiazole, in the thiamine biosynthesis pathway. The sulfur is donated as persulfide by IscS. In Moorella thermoacetica (strain ATCC 39073 / JCM 9320), this protein is Probable tRNA sulfurtransferase.